The primary structure comprises 283 residues: ATP phosphoribosyltransferase (283 aa).

It belongs to the ATP phosphoribosyltransferase family. Long subfamily. Requires Mg(2+) as cofactor.

The protein localises to the cytoplasm. The enzyme catalyses 1-(5-phospho-beta-D-ribosyl)-ATP + diphosphate = 5-phospho-alpha-D-ribose 1-diphosphate + ATP. It participates in amino-acid biosynthesis; L-histidine biosynthesis; L-histidine from 5-phospho-alpha-D-ribose 1-diphosphate: step 1/9. Its activity is regulated as follows. Feedback inhibited by histidine. In terms of biological role, catalyzes the condensation of ATP and 5-phosphoribose 1-diphosphate to form N'-(5'-phosphoribosyl)-ATP (PR-ATP). Has a crucial role in the pathway because the rate of histidine biosynthesis seems to be controlled primarily by regulation of HisG enzymatic activity. This chain is ATP phosphoribosyltransferase, found in Nocardia farcinica (strain IFM 10152).